The sequence spans 173 residues: Probable WRKY transcription factor 50 (173 aa).

The segment at residues 107 to 172 is a DNA-binding region (WRKY); that stretch reads SEVEVLDDGF…YEGSHNHSSM (66 aa).

Belongs to the WRKY group II-c family.

It localises to the nucleus. Its function is as follows. Transcription factor. Interacts specifically with the W box (5'-(T)TGAC[CT]-3'), a frequently occurring elicitor-responsive cis-acting element. This Arabidopsis thaliana (Mouse-ear cress) protein is Probable WRKY transcription factor 50 (WRKY50).